A 290-amino-acid chain; its full sequence is Probable adenylate kinase 2, chloroplastic (290 aa).

Low complexity predominate over residues 1 to 10 (MASSMAATAT). Residues 1–37 (MASSMAATATLSPPVLSAERPTVRGGLFLPPSPATSR) form a disordered region. Residues 1-61 (MASSMAATAT…ATRKPRSLPR (61 aa)) constitute a chloroplast transit peptide. 83 to 88 (ASGKGT) serves as a coordination point for ATP. The NMP stretch occupies residues 103–132 (SAGDLLRAEIAAGSENGKRAKEFMEKGQLV). Residues R109, 130–132 (QLV), 159–162 (GYPR), and Q166 contribute to the AMP site. ATP-binding positions include R193, R197, and 206 to 207 (IY). The LID stretch occupies residues 196 to 229 (GRRLDPVTGKIYHLKYSPPENEEIASRLTQRFDD). Residues R226 and R237 each coordinate AMP.

Belongs to the adenylate kinase family.

The protein resides in the plastid. The protein localises to the chloroplast. The enzyme catalyses AMP + ATP = 2 ADP. Its function is as follows. Catalyzes the reversible transfer of the terminal phosphate group between ATP and AMP. Plays an important role in cellular energy homeostasis and in adenine nucleotide metabolism. The sequence is that of Probable adenylate kinase 2, chloroplastic from Oryza sativa subsp. japonica (Rice).